The chain runs to 122 residues: Large ribosomal subunit protein uL14 (122 aa).

This sequence belongs to the universal ribosomal protein uL14 family. In terms of assembly, part of the 50S ribosomal subunit. Forms a cluster with proteins L3 and L19. In the 70S ribosome, L14 and L19 interact and together make contacts with the 16S rRNA in bridges B5 and B8.

Functionally, binds to 23S rRNA. Forms part of two intersubunit bridges in the 70S ribosome. The polypeptide is Large ribosomal subunit protein uL14 (Lachnospira eligens (strain ATCC 27750 / DSM 3376 / VPI C15-48 / C15-B4) (Eubacterium eligens)).